Here is a 227-residue protein sequence, read N- to C-terminus: Cytochrome c oxidase subunit 2 (227 aa).

The Mitochondrial intermembrane segment spans residues 1–14; sequence MAYPMQLGFQDATS. The helical transmembrane segment at 15–45 threads the bilayer; it reads PIMEELLHFHDHTLMIVFLISSLVLYIISLM. Topologically, residues 46-59 are mitochondrial matrix; it reads LTTKLTHTSTMDAQ. A helical transmembrane segment spans residues 60-87; that stretch reads EVETIWTILPAIILILIALPSLRILYMM. Topologically, residues 88 to 227 are mitochondrial intermembrane; the sequence is DEINNPSLTV…YFEKWSASML (140 aa). Residues H161, C196, E198, C200, H204, and M207 each coordinate Cu cation. E198 lines the Mg(2+) pocket. Y218 bears the Phosphotyrosine mark.

This sequence belongs to the cytochrome c oxidase subunit 2 family. Component of the cytochrome c oxidase (complex IV, CIV), a multisubunit enzyme composed of 14 subunits. The complex is composed of a catalytic core of 3 subunits MT-CO1, MT-CO2 and MT-CO3, encoded in the mitochondrial DNA, and 11 supernumerary subunits COX4I, COX5A, COX5B, COX6A, COX6B, COX6C, COX7A, COX7B, COX7C, COX8 and NDUFA4, which are encoded in the nuclear genome. The complex exists as a monomer or a dimer and forms supercomplexes (SCs) in the inner mitochondrial membrane with NADH-ubiquinone oxidoreductase (complex I, CI) and ubiquinol-cytochrome c oxidoreductase (cytochrome b-c1 complex, complex III, CIII), resulting in different assemblies (supercomplex SCI(1)III(2)IV(1) and megacomplex MCI(2)III(2)IV(2)). Found in a complex with TMEM177, COA6, COX18, COX20, SCO1 and SCO2. Interacts with TMEM177 in a COX20-dependent manner. Interacts with COX20. Interacts with COX16. Cu cation serves as cofactor.

It is found in the mitochondrion inner membrane. It carries out the reaction 4 Fe(II)-[cytochrome c] + O2 + 8 H(+)(in) = 4 Fe(III)-[cytochrome c] + 2 H2O + 4 H(+)(out). Its function is as follows. Component of the cytochrome c oxidase, the last enzyme in the mitochondrial electron transport chain which drives oxidative phosphorylation. The respiratory chain contains 3 multisubunit complexes succinate dehydrogenase (complex II, CII), ubiquinol-cytochrome c oxidoreductase (cytochrome b-c1 complex, complex III, CIII) and cytochrome c oxidase (complex IV, CIV), that cooperate to transfer electrons derived from NADH and succinate to molecular oxygen, creating an electrochemical gradient over the inner membrane that drives transmembrane transport and the ATP synthase. Cytochrome c oxidase is the component of the respiratory chain that catalyzes the reduction of oxygen to water. Electrons originating from reduced cytochrome c in the intermembrane space (IMS) are transferred via the dinuclear copper A center (CU(A)) of subunit 2 and heme A of subunit 1 to the active site in subunit 1, a binuclear center (BNC) formed by heme A3 and copper B (CU(B)). The BNC reduces molecular oxygen to 2 water molecules using 4 electrons from cytochrome c in the IMS and 4 protons from the mitochondrial matrix. The sequence is that of Cytochrome c oxidase subunit 2 (MT-CO2) from Boselaphus tragocamelus (Nilgai).